Here is a 526-residue protein sequence, read N- to C-terminus: MPSLRRLLPFLAAGSAALASQDTFQGKCTGFADKINLPNVRVNFVNYVPGGTNLSLPDNPTSCGTTSQVVSEDVCRIAMAVATSNSSEITLEAWLPQNYTGRFLSTGNGGLSGCIQYYDLAYTSGLGFATVGANSGHNGTSGEPFYHHPEVLEDFVHRSVHTGVVVGKQLTKLFYEEGFKKSYYLGCSTGGRQGFKSVQKYPNDFDGVVAGAPAFNMINLMSWSAHFYSITGPVGSDTYLSPDLWNITHKEILRQCDGIDGAEDGIIEDPSLCSPVLEAIICKPGQNTTECLTGKQAHTVREIFSPLYGVNGTLLYPRMQPGSEVMASSIMYNGQPFQYSADWYRYVVYENPNWDATKFSVRDAAVALKQNPFNLQTWDADISSFRKAGGKVLTYHGLMDQLISSENSKLYYARVAETMNVPPEELDEFYRFFQISGMAHCSGGDGAYGIGNQLVTYNDANPENNVLMAMVQWVEKGIAPETIRGAKFTNGTGSAVEYTRKHCRYPRRNVYKGPGNYTDENAWQCV.

The first 19 residues, Met-1–Ala-19, serve as a signal peptide directing secretion. Disulfide bonds link Cys-28-Cys-75 and Cys-63-Cys-114. N-linked (GlcNAc...) asparagine glycans are attached at residues Asn-53, Asn-85, Asn-98, and Asn-138. 3 cysteine pairs are disulfide-bonded: Cys-187/Cys-441, Cys-256/Cys-273, and Cys-282/Cys-291. Residue Ser-188 is the Acyl-ester intermediate of the active site. An N-linked (GlcNAc...) asparagine glycan is attached at Asn-246. 5 residues coordinate Ca(2+): Asp-257, Asp-260, Ala-262, Asp-264, and Ile-266. N-linked (GlcNAc...) asparagine glycosylation is found at Asn-287 and Asn-311. Catalysis depends on charge relay system residues Asp-400 and His-440. 2 N-linked (GlcNAc...) asparagine glycosylation sites follow: Asn-490 and Asn-516. A disulfide bridge links Cys-503 with Cys-525.

The protein belongs to the tannase family.

The protein resides in the secreted. The catalysed reaction is feruloyl-polysaccharide + H2O = ferulate + polysaccharide.. Functionally, involved in degradation of plant cell walls. Hydrolyzes the feruloyl-arabinose ester bond in arabinoxylans as well as the feruloyl-galactose and feruloyl-arabinose ester bonds in pectin. This Aspergillus oryzae (strain ATCC 42149 / RIB 40) (Yellow koji mold) protein is Probable feruloyl esterase B-2 (faeB-2).